The chain runs to 204 residues: Glycerol-3-phosphate acyltransferase (204 aa).

Transmembrane regions (helical) follow at residues 8 to 28 (ILIF…CYIF), 53 to 73 (VPAA…VVIA), 81 to 101 (FITA…IFFG), 116 to 136 (FGFS…VAII), and 155 to 175 (VIFT…IIIL).

Belongs to the PlsY family. In terms of assembly, probably interacts with PlsX.

It localises to the cell inner membrane. It carries out the reaction an acyl phosphate + sn-glycerol 3-phosphate = a 1-acyl-sn-glycero-3-phosphate + phosphate. The protein operates within lipid metabolism; phospholipid metabolism. Catalyzes the transfer of an acyl group from acyl-phosphate (acyl-PO(4)) to glycerol-3-phosphate (G3P) to form lysophosphatidic acid (LPA). This enzyme utilizes acyl-phosphate as fatty acyl donor, but not acyl-CoA or acyl-ACP. The protein is Glycerol-3-phosphate acyltransferase of Francisella tularensis subsp. tularensis (strain FSC 198).